Here is a 361-residue protein sequence, read N- to C-terminus: Phenylalanine--tRNA ligase alpha subunit (361 aa).

Glu-260 lines the Mg(2+) pocket.

The protein belongs to the class-II aminoacyl-tRNA synthetase family. Phe-tRNA synthetase alpha subunit type 1 subfamily. As to quaternary structure, tetramer of two alpha and two beta subunits. Mg(2+) is required as a cofactor.

It is found in the cytoplasm. The enzyme catalyses tRNA(Phe) + L-phenylalanine + ATP = L-phenylalanyl-tRNA(Phe) + AMP + diphosphate + H(+). The chain is Phenylalanine--tRNA ligase alpha subunit from Allorhizobium ampelinum (strain ATCC BAA-846 / DSM 112012 / S4) (Agrobacterium vitis (strain S4)).